Here is a 216-residue protein sequence, read N- to C-terminus: Thiopurine S-methyltransferase (216 aa).

The S-adenosyl-L-methionine site is built by W11, L46, E67, and R122.

Belongs to the class I-like SAM-binding methyltransferase superfamily. TPMT family.

Its subcellular location is the cytoplasm. The catalysed reaction is S-adenosyl-L-methionine + a thiopurine = S-adenosyl-L-homocysteine + a thiopurine S-methylether.. The chain is Thiopurine S-methyltransferase from Vibrio campbellii (strain ATCC BAA-1116).